A 296-amino-acid polypeptide reads, in one-letter code: Ribosomal protein L11 methyltransferase (296 aa).

The S-adenosyl-L-methionine site is built by T139, G163, D185, and N232.

It belongs to the methyltransferase superfamily. PrmA family.

The protein resides in the cytoplasm. It carries out the reaction L-lysyl-[protein] + 3 S-adenosyl-L-methionine = N(6),N(6),N(6)-trimethyl-L-lysyl-[protein] + 3 S-adenosyl-L-homocysteine + 3 H(+). Its function is as follows. Methylates ribosomal protein L11. In Rippkaea orientalis (strain PCC 8801 / RF-1) (Cyanothece sp. (strain PCC 8801)), this protein is Ribosomal protein L11 methyltransferase.